A 475-amino-acid polypeptide reads, in one-letter code: MVVCKYFLQNRCRYGTNCKNQHTVPSNGQNAFSKVNVFRPENGRPPIWVQRRLKRSDLDNLLPNRRMKDINDDLKNAKPQWPFTGYSVVENLPSIYEGDVSPEELRWWAYQAKATNNMQAYEQRQKQLMDDVEAKAAAVKRSPAAAFDEMRNKLVGKTNYKSIFDKSTSNSTVTSNQFNKPTQNSPFNSFSNNNNSFNNNQQANDIFGAPTTSAFTSQLNASPFSQNTSSNSFTGSNPVQNNPSSFGSSSFGSATSGPSAFGGISQPNSSFVNSGQGIPNSSFSSFSQVASGFSQSQNVNDPSSIFGPTVASGFGIQNQPQQSAFQNLNTQFSLPNNSQPVFGHTSLTQPVNPNGFTVQPPATFMQQPQGPFVPPNTTFESPFANVTSKISASGFSNDNPANKNIIQTPMFGSSNTIDGPINPIGASSIQTLDDQVEMSNSNQNLAFPPEMIQQFEAQDFIPGKVPTTAPPPQFC.

A C3H1-type zinc finger spans residues 1 to 25 (MVVCKYFLQNRCRYGTNCKNQHTVP). Positions 165–182 (DKSTSNSTVTSNQFNKPT) are enriched in polar residues. Disordered stretches follow at residues 165–208 (DKST…DIFG) and 220–252 (NASPFSQNTSSNSFTGSNPVQNNPSSFGSSSFG). Positions 183 to 204 (QNSPFNSFSNNNNSFNNNQQAN) are enriched in low complexity. Positions 220 to 242 (NASPFSQNTSSNSFTGSNPVQNN) are enriched in polar residues. Over residues 243–252 (PSSFGSSSFG) the composition is skewed to low complexity.

Its subcellular location is the nucleus. Involved in the cell polarity process where it is required for the correct termination of microtubule growth at the cell ends during interphase. This chain is Nucleoporin-like protein amo1 (amo1), found in Schizosaccharomyces pombe (strain 972 / ATCC 24843) (Fission yeast).